Consider the following 97-residue polypeptide: Aspartyl/glutamyl-tRNA(Asn/Gln) amidotransferase subunit C (97 aa).

It belongs to the GatC family. In terms of assembly, heterotrimer of A, B and C subunits.

It catalyses the reaction L-glutamyl-tRNA(Gln) + L-glutamine + ATP + H2O = L-glutaminyl-tRNA(Gln) + L-glutamate + ADP + phosphate + H(+). The catalysed reaction is L-aspartyl-tRNA(Asn) + L-glutamine + ATP + H2O = L-asparaginyl-tRNA(Asn) + L-glutamate + ADP + phosphate + 2 H(+). In terms of biological role, allows the formation of correctly charged Asn-tRNA(Asn) or Gln-tRNA(Gln) through the transamidation of misacylated Asp-tRNA(Asn) or Glu-tRNA(Gln) in organisms which lack either or both of asparaginyl-tRNA or glutaminyl-tRNA synthetases. The reaction takes place in the presence of glutamine and ATP through an activated phospho-Asp-tRNA(Asn) or phospho-Glu-tRNA(Gln). This chain is Aspartyl/glutamyl-tRNA(Asn/Gln) amidotransferase subunit C, found in Anaeromyxobacter sp. (strain K).